Reading from the N-terminus, the 514-residue chain is Exoglucanase 1 (514 aa).

The signal sequence occupies residues 1–17; that stretch reads MYQKLALISAFLATARA. The segment at 18 to 453 is catalytic; the sequence is QSACTLQAET…GSTGNSSGGN (436 aa). 10 cysteine pairs are disulfide-bonded: cysteine 21–cysteine 89, cysteine 36–cysteine 42, cysteine 67–cysteine 88, cysteine 78–cysteine 84, cysteine 155–cysteine 414, cysteine 189–cysteine 227, cysteine 193–cysteine 226, cysteine 247–cysteine 273, cysteine 255–cysteine 260, and cysteine 278–cysteine 348. N-linked (GlcNAc...) asparagine glycans are attached at residues asparagine 62 and asparagine 81. Glutamate 229 functions as the Nucleophile in the catalytic mechanism. Glutamate 234 functions as the Proton donor in the catalytic mechanism. The N-linked (GlcNAc...) asparagine glycan is linked to asparagine 287. Disordered regions lie at residues 401–427 and 444–481; these read NETSSTPGAVRGSCSTSSGVPAQLESN and GSTGNSSGGNPPGGNPPGTTTTRRPATSTGSSPGPTQT. A linker region spans residues 454–478; the sequence is PPGGNPPGTTTTRRPATSTGSSPGP. Positions 460-479 are enriched in low complexity; that stretch reads PGTTTTRRPATSTGSSPGPT. Positions 478 to 514 constitute a CBM1 domain; the sequence is PTQTHYGQCGGIGYSGPTVCASGSTCQVLNPYYSQCL. Cystine bridges form between cysteine 486-cysteine 503 and cysteine 497-cysteine 513.

It belongs to the glycosyl hydrolase 7 (cellulase C) family.

It carries out the reaction Hydrolysis of (1-&gt;4)-beta-D-glucosidic linkages in cellulose and cellotetraose, releasing cellobiose from the non-reducing ends of the chains.. In terms of biological role, the biological conversion of cellulose to glucose generally requires three types of hydrolytic enzymes: (1) Endoglucanases which cut internal beta-1,4-glucosidic bonds; (2) Exocellobiohydrolases that cut the disaccharide cellobiose from the non-reducing end of the cellulose polymer chain; (3) Beta-1,4-glucosidases which hydrolyze the cellobiose and other short cello-oligosaccharides to glucose. The polypeptide is Exoglucanase 1 (cbh1) (Hypocrea rufa (Trichoderma viride)).